We begin with the raw amino-acid sequence, 371 residues long: Bifunctional enzyme IspD/IspF (371 aa).

Residues 1–210 (MSEMSLIMLA…LNLPTPSFEI (210 aa)) form a 2-C-methyl-D-erythritol 4-phosphate cytidylyltransferase region. A 2-C-methyl-D-erythritol 2,4-cyclodiphosphate synthase region spans residues 211–371 (FTGNGFDVHE…NLKYFDWTRL (161 aa)). The a divalent metal cation site is built by aspartate 217 and histidine 219. Residues 217–219 (DVH) and 243–244 (HS) contribute to the 4-CDP-2-C-methyl-D-erythritol 2-phosphate site. Residue histidine 251 coordinates a divalent metal cation. 4-CDP-2-C-methyl-D-erythritol 2-phosphate-binding positions include 265–267 (DIG), 270–274 (YPDTD), 341–344 (TTTE), phenylalanine 348, and arginine 351.

It in the N-terminal section; belongs to the IspD/TarI cytidylyltransferase family. IspD subfamily. The protein in the C-terminal section; belongs to the IspF family. Requires a divalent metal cation as cofactor.

The catalysed reaction is 2-C-methyl-D-erythritol 4-phosphate + CTP + H(+) = 4-CDP-2-C-methyl-D-erythritol + diphosphate. It catalyses the reaction 4-CDP-2-C-methyl-D-erythritol 2-phosphate = 2-C-methyl-D-erythritol 2,4-cyclic diphosphate + CMP. Its pathway is isoprenoid biosynthesis; isopentenyl diphosphate biosynthesis via DXP pathway; isopentenyl diphosphate from 1-deoxy-D-xylulose 5-phosphate: step 2/6. The protein operates within isoprenoid biosynthesis; isopentenyl diphosphate biosynthesis via DXP pathway; isopentenyl diphosphate from 1-deoxy-D-xylulose 5-phosphate: step 4/6. Bifunctional enzyme that catalyzes the formation of 4-diphosphocytidyl-2-C-methyl-D-erythritol from CTP and 2-C-methyl-D-erythritol 4-phosphate (MEP) (IspD), and catalyzes the conversion of 4-diphosphocytidyl-2-C-methyl-D-erythritol 2-phosphate (CDP-ME2P) to 2-C-methyl-D-erythritol 2,4-cyclodiphosphate (ME-CPP) with a corresponding release of cytidine 5-monophosphate (CMP) (IspF). This is Bifunctional enzyme IspD/IspF from Campylobacter jejuni (strain RM1221).